The chain runs to 475 residues: uncharacterized protein (475 aa).

The tract at residues 42–292 (NLQNSLTGKT…NTRKGQRHNN (251 aa)) is disordered. Basic and acidic residues-rich tracts occupy residues 59-72 (EANH…KSED) and 119-134 (IAEK…DDSQ). Polar residues-rich tracts occupy residues 150–159 (ITPNFTHTPI) and 220–242 (NNTF…TSED). Over residues 243–263 (SSSQAPHHSSSSGHAPSQQGG) the composition is skewed to low complexity. Positions 277–289 (FHHKGRNTRKGQR) are enriched in basic residues. An HTH La-type RNA-binding domain is found at 319–408 (NPYLCDVQAF…MSIKVRRKET (90 aa)). T408 carries the phosphothreonine modification. Position 410 is a phosphoserine (S410).

The protein localises to the cytoplasm. This is an uncharacterized protein from Schizosaccharomyces pombe (strain 972 / ATCC 24843) (Fission yeast).